The chain runs to 294 residues: Nucleotide-binding protein Tfu_2020 (294 aa).

Position 18–25 (18–25 (GMSGAGRS)) interacts with ATP. 69–72 (DVRS) is a binding site for GTP.

This sequence belongs to the RapZ-like family.

Its function is as follows. Displays ATPase and GTPase activities. The protein is Nucleotide-binding protein Tfu_2020 of Thermobifida fusca (strain YX).